Here is a 596-residue protein sequence, read N- to C-terminus: MAARWAQFLLFSLLSLPQVYCEYGMVHVLSEKGSSKGKDYCILFNSQWAHLPHDLGKASLLQLQDQTASVLCSPSDVPDGGFNNRIPMVMRGNCTFYEKVRLAQINGARGLLIVSRERLVPPGGNRSQYEEIDIPVALLSYSDMLDIVKSFGRSVKGAMYAPNEPVLDYNMVIIFVMAVGTVAIGGYWAGSRDVKERYMKHKRDDGAEKHEDETVDVTPIMICVFVVMCCSMLVLLYFFYDHLVYVIIGIFCLAASIGLYSCLSPFVRRFPLGKCRIPDNNLPYFHKRPQVRILLLAVFCISVSVVWGVFRNEDQWAWVLQDALGIAFCLYMLKTIRLPTFKGCTLLLLVLFVYDVFFVFITPFLTKTGESIMVEVAAGPSDSATHEKLPMVLKVPRLNSSPLALCDRPFSLLGFGDILVPGLLVAYCHRFDIQVQSSRVYFVACTIAYGIGLLVTFVALALMQMGQPALLYLVPCTLITSFSVALWRKELAMFWTGSGFAKDLPQPPLVIASVNCPQLPKDSNVPASQQETEEMANPTLHVKELHSPTLAAEEPADNDTKTEQSEVSIAQSEEAAGHNKDDLESKSLNLEQKQLE.

Positions 1 to 21 are cleaved as a signal peptide; the sequence is MAARWAQFLLFSLLSLPQVYC. At 22–170 the chain is on the lumenal side; that stretch reads EYGMVHVLSE…APNEPVLDYN (149 aa). Residues 53–147 form the PA domain; the sequence is HDLGKASLLQ…LLSYSDMLDI (95 aa). N93 carries an N-linked (GlcNAc...) asparagine glycan. The chain crosses the membrane as a helical span at residues 171 to 191; the sequence is MVIIFVMAVGTVAIGGYWAGS. The Cytoplasmic portion of the chain corresponds to 192–219; the sequence is RDVKERYMKHKRDDGAEKHEDETVDVTP. The helical transmembrane segment at 220 to 240 threads the bilayer; it reads IMICVFVVMCCSMLVLLYFFY. Residues 241 to 242 lie on the Lumenal side of the membrane; that stretch reads DH. Residues 243–263 form a helical membrane-spanning segment; sequence LVYVIIGIFCLAASIGLYSCL. The Cytoplasmic portion of the chain corresponds to 264 to 289; that stretch reads SPFVRRFPLGKCRIPDNNLPYFHKRP. Residues 290–310 traverse the membrane as a helical segment; the sequence is QVRILLLAVFCISVSVVWGVF. At 311–315 the chain is on the lumenal side; it reads RNEDQ. A helical transmembrane segment spans residues 316–336; that stretch reads WAWVLQDALGIAFCLYMLKTI. The Cytoplasmic segment spans residues 337–344; the sequence is RLPTFKGC. The chain crosses the membrane as a helical span at residues 345–365; sequence TLLLLVLFVYDVFFVFITPFL. Residue D355 is part of the active site. The Lumenal segment spans residues 366-408; sequence TKTGESIMVEVAAGPSDSATHEKLPMVLKVPRLNSSPLALCDR. Residues 409-429 traverse the membrane as a helical segment; it reads PFSLLGFGDILVPGLLVAYCH. Residue D417 is part of the active site. Over 430–441 the chain is Cytoplasmic; the sequence is RFDIQVQSSRVY. A helical membrane pass occupies residues 442–462; the sequence is FVACTIAYGIGLLVTFVALAL. The Lumenal portion of the chain corresponds to 463-466; it reads MQMG. The helical transmembrane segment at 467–487 threads the bilayer; that stretch reads QPALLYLVPCTLITSFSVALW. The PAL signature appears at 468-470; it reads PAL. At 488–596 the chain is on the cytoplasmic side; that stretch reads RKELAMFWTG…SLNLEQKQLE (109 aa). The disordered stretch occupies residues 543–596; that stretch reads KELHSPTLAAEEPADNDTKTEQSEVSIAQSEEAAGHNKDDLESKSLNLEQKQLE. Residues 575–585 are compositionally biased toward basic and acidic residues; that stretch reads AAGHNKDDLES. Residues 586-596 are compositionally biased toward polar residues; sequence KSLNLEQKQLE.

The protein belongs to the peptidase A22B family.

Its subcellular location is the cell membrane. The protein localises to the golgi apparatus membrane. It localises to the lysosome membrane. It is found in the endosome membrane. The protein resides in the membrane. In terms of biological role, intramembrane-cleaving aspartic protease (I-CLiP) that cleaves type II membrane signal peptides in the hydrophobic plane of the membrane. The chain is Signal peptide peptidase-like 2B from Gallus gallus (Chicken).